Consider the following 464-residue polypeptide: Propanal dehydrogenase (CoA-propanoylating) (464 aa).

A targets protein to the BMC region spans residues 1 to 18 (MNTSELETLIRTILSEQL).

Belongs to the EutE/PduP family. Interacts with BMC shell proteins PduA and PduJ, which target this protein to BMC. Interacts with PduQ, probably via the N-terminus of PduQ. Interacts with PduK, probably with its BMC-containing N-terminus.

The protein resides in the bacterial microcompartment. The catalysed reaction is propanal + NAD(+) + CoA = propanoyl-CoA + NADH + H(+). Its pathway is polyol metabolism; 1,2-propanediol degradation. In terms of biological role, a CoA-acylating aldehyde dehydrogenase required for optimal 1,2-propanediol (1,2-PD) degradation. Optimizes growth in the bacterial microcompartment (BMC) dedicated to 1,2-PD degradation by minimizing propionaldehyde toxicity. Directly targeted to the BMC. NAD(+) and NADH are regenerated internally within the Pdu BMC by the PduP and PduQ enzymes, which reduce NAD(+) and oxidize NADH respectively, although there must also be cofactor transport across the BMC. Its function is as follows. The 1,2-PD-specific bacterial microcompartment (BMC) concentrates low levels of 1,2-PD catabolic enzymes, concentrates volatile reaction intermediates thus enhancing pathway flux and keeps the level of toxic, mutagenic propionaldehyde low. The sequence is that of Propanal dehydrogenase (CoA-propanoylating) from Salmonella typhimurium (strain LT2 / SGSC1412 / ATCC 700720).